We begin with the raw amino-acid sequence, 396 residues long: Tryptophan synthase beta chain (396 aa).

At lysine 86 the chain carries N6-(pyridoxal phosphate)lysine.

The protein belongs to the TrpB family. In terms of assembly, tetramer of two alpha and two beta chains. Pyridoxal 5'-phosphate serves as cofactor.

The enzyme catalyses (1S,2R)-1-C-(indol-3-yl)glycerol 3-phosphate + L-serine = D-glyceraldehyde 3-phosphate + L-tryptophan + H2O. It functions in the pathway amino-acid biosynthesis; L-tryptophan biosynthesis; L-tryptophan from chorismate: step 5/5. The beta subunit is responsible for the synthesis of L-tryptophan from indole and L-serine. The protein is Tryptophan synthase beta chain of Yersinia pseudotuberculosis serotype O:1b (strain IP 31758).